Reading from the N-terminus, the 547-residue chain is Chaperonin GroEL (547 aa).

Residues 30–33 (TLGP), Lys-51, 87–91 (DGTTT), Gly-415, 479–481 (NAA), and Asp-495 each bind ATP. Positions 526-547 (KEEKSDLSVPPQGGMGGMGGMM) are disordered. Residues 538–547 (GGMGGMGGMM) are compositionally biased toward gly residues.

It belongs to the chaperonin (HSP60) family. In terms of assembly, forms a cylinder of 14 subunits composed of two heptameric rings stacked back-to-back. Interacts with the co-chaperonin GroES.

The protein localises to the cytoplasm. The catalysed reaction is ATP + H2O + a folded polypeptide = ADP + phosphate + an unfolded polypeptide.. Together with its co-chaperonin GroES, plays an essential role in assisting protein folding. The GroEL-GroES system forms a nano-cage that allows encapsulation of the non-native substrate proteins and provides a physical environment optimized to promote and accelerate protein folding. This chain is Chaperonin GroEL, found in Buchnera aphidicola subsp. Tetraneura caerulescens.